A 277-amino-acid chain; its full sequence is Pantothenate synthetase (277 aa).

Position 26 to 33 (26 to 33 (MGNLHEGH)) interacts with ATP. Catalysis depends on histidine 33, which acts as the Proton donor. Glutamine 57 contributes to the (R)-pantoate binding site. Glutamine 57 lines the beta-alanine pocket. 144–147 (GKKD) serves as a coordination point for ATP. Glutamine 150 lines the (R)-pantoate pocket. Residues glycine 173 and 181–184 (LSSR) each bind ATP.

This sequence belongs to the pantothenate synthetase family. As to quaternary structure, homodimer.

The protein resides in the cytoplasm. The catalysed reaction is (R)-pantoate + beta-alanine + ATP = (R)-pantothenate + AMP + diphosphate + H(+). The protein operates within cofactor biosynthesis; (R)-pantothenate biosynthesis; (R)-pantothenate from (R)-pantoate and beta-alanine: step 1/1. Functionally, catalyzes the condensation of pantoate with beta-alanine in an ATP-dependent reaction via a pantoyl-adenylate intermediate. The chain is Pantothenate synthetase from Chromobacterium violaceum (strain ATCC 12472 / DSM 30191 / JCM 1249 / CCUG 213 / NBRC 12614 / NCIMB 9131 / NCTC 9757 / MK).